A 117-amino-acid chain; its full sequence is Cliotide T9 (117 aa).

A signal peptide spans 1 to 25 (MAYVRLACLAVIFFFAASVMFTVEA). Residues 26–55 (GIPCGESCVFIPCLTTVVGCSCKNKVCYNN) constitute a cross-link (cyclopeptide (Gly-Asn)). Intrachain disulfides connect Cys29–Cys45, Cys33–Cys47, and Cys38–Cys52. A propeptide spans 56 to 117 (HVIAAEANSI…YLLKDFLKMP (62 aa)) (removed in mature form).

Post-translationally, contains 3 disulfide bonds. In terms of processing, this is a cyclic peptide. As to expression, expressed in seed but not in root, nodule, flower, stem, shoot, leaf and pod (at protein level).

Functionally, probably participates in a plant defense mechanism. This is Cliotide T9 from Clitoria ternatea (Butterfly pea).